Consider the following 507-residue polypeptide: GMP synthase [glutamine-hydrolyzing] (507 aa).

In terms of domain architecture, Glutamine amidotransferase type-1 spans lysine 3–serine 190. Cysteine 77 acts as the Nucleophile in catalysis. Active-site residues include histidine 164 and glutamate 166. The 192-residue stretch at tryptophan 191 to arginine 382 folds into the GMPS ATP-PPase domain. Serine 218–serine 224 serves as a coordination point for ATP.

Homodimer.

It catalyses the reaction XMP + L-glutamine + ATP + H2O = GMP + L-glutamate + AMP + diphosphate + 2 H(+). It functions in the pathway purine metabolism; GMP biosynthesis; GMP from XMP (L-Gln route): step 1/1. Functionally, catalyzes the synthesis of GMP from XMP. The protein is GMP synthase [glutamine-hydrolyzing] of Petrotoga mobilis (strain DSM 10674 / SJ95).